We begin with the raw amino-acid sequence, 245 residues long: Uridylate kinase (245 aa).

12–15 (KISG) contacts ATP. Glycine 55 serves as a coordination point for UMP. The ATP site is built by glycine 56 and arginine 60. UMP-binding positions include aspartate 76 and 137–144 (AGAPYLTT). ATP-binding residues include threonine 164, tyrosine 171, and aspartate 174.

Belongs to the UMP kinase family. In terms of assembly, homohexamer.

The protein localises to the cytoplasm. The catalysed reaction is UMP + ATP = UDP + ADP. It participates in pyrimidine metabolism; CTP biosynthesis via de novo pathway; UDP from UMP (UMPK route): step 1/1. Its activity is regulated as follows. Inhibited by UTP. Catalyzes the reversible phosphorylation of UMP to UDP. The protein is Uridylate kinase of Chlamydia trachomatis serovar A (strain ATCC VR-571B / DSM 19440 / HAR-13).